Consider the following 509-residue polypeptide: Maturase K (509 aa).

The protein belongs to the intron maturase 2 family. MatK subfamily.

The protein localises to the plastid. It localises to the chloroplast. Its function is as follows. Usually encoded in the trnK tRNA gene intron. Probably assists in splicing its own and other chloroplast group II introns. The chain is Maturase K from Clematis ligusticifolia (Western white clematis).